The primary structure comprises 176 residues: Ribosome maturation factor RimM (176 aa).

Residues 93–170 (DGEYYHADLI…ELPTEIEGDT (78 aa)) enclose the PRC barrel domain.

It belongs to the RimM family. In terms of assembly, binds ribosomal protein uS19.

It localises to the cytoplasm. Its function is as follows. An accessory protein needed during the final step in the assembly of 30S ribosomal subunit, possibly for assembly of the head region. Essential for efficient processing of 16S rRNA. May be needed both before and after RbfA during the maturation of 16S rRNA. It has affinity for free ribosomal 30S subunits but not for 70S ribosomes. This Rhodopseudomonas palustris (strain BisB5) protein is Ribosome maturation factor RimM.